The sequence spans 594 residues: Potassium-transporting ATPase potassium-binding subunit (594 aa).

10 helical membrane-spanning segments follow: residues 3-23 (ADFL…APLL), 67-87 (AVAM…LQRL), 136-156 (ALTV…IALV), 179-199 (LYVL…QGVV), 287-307 (LEML…GEMV), 314-334 (VAIL…AAYF), 415-435 (GLYG…LMIG), 453-473 (VALV…VAVL), 519-539 (VLLG…ILAL), and 562-582 (LFVA…YVPA).

The protein belongs to the KdpA family. In terms of assembly, the system is composed of three essential subunits: KdpA, KdpB and KdpC.

It localises to the cell inner membrane. Functionally, part of the high-affinity ATP-driven potassium transport (or Kdp) system, which catalyzes the hydrolysis of ATP coupled with the electrogenic transport of potassium into the cytoplasm. This subunit binds the periplasmic potassium ions and delivers the ions to the membrane domain of KdpB through an intramembrane tunnel. In Bordetella parapertussis (strain 12822 / ATCC BAA-587 / NCTC 13253), this protein is Potassium-transporting ATPase potassium-binding subunit.